A 276-amino-acid polypeptide reads, in one-letter code: Putative pyruvate, phosphate dikinase regulatory protein (276 aa).

Gly150–Thr157 contributes to the ADP binding site.

The protein belongs to the pyruvate, phosphate/water dikinase regulatory protein family. PDRP subfamily.

It catalyses the reaction N(tele)-phospho-L-histidyl/L-threonyl-[pyruvate, phosphate dikinase] + ADP = N(tele)-phospho-L-histidyl/O-phospho-L-threonyl-[pyruvate, phosphate dikinase] + AMP + H(+). The catalysed reaction is N(tele)-phospho-L-histidyl/O-phospho-L-threonyl-[pyruvate, phosphate dikinase] + phosphate + H(+) = N(tele)-phospho-L-histidyl/L-threonyl-[pyruvate, phosphate dikinase] + diphosphate. In terms of biological role, bifunctional serine/threonine kinase and phosphorylase involved in the regulation of the pyruvate, phosphate dikinase (PPDK) by catalyzing its phosphorylation/dephosphorylation. The protein is Putative pyruvate, phosphate dikinase regulatory protein of Lacticaseibacillus casei (strain BL23) (Lactobacillus casei).